The sequence spans 196 residues: MELAKMSDMTKLHQAVAAGDYSLVKKILKKGLCDPNYKDVDWNDRTPLHWAAIKGQMEVIRLLIEYGARPCLVTSVGWTPAHFAAEAGHLNILKTLHALHAAIDAPDFFGDTPKRIAQIYGQKACVAFLEKAEPECQDHRCAAQQKGLPLDERDEDWDAKKRELELSLPSLNQNMNKKNKKSRGPTRPSNTKGRRV.

ANK repeat units lie at residues Ser-7–Tyr-37, Asn-43–Leu-72, and Val-76–Ala-105. A disordered region spans residues Glu-152–Val-196. Positions Arg-187 to Val-196 are enriched in polar residues.

The protein is Ankyrin repeat domain-containing protein 66 (ANKRD66) of Homo sapiens (Human).